The chain runs to 326 residues: Phospho-N-acetylmuramoyl-pentapeptide-transferase (326 aa).

Helical transmembrane passes span 3–23 (ISIS…PAFI), 51–71 (TMGG…FALF), 79–99 (VGMI…DDFL), 115–135 (LALQ…GGDI), 138–158 (VFGY…FWLV), 169–189 (GVDG…GVIA), 195–215 (MDIL…FIFN), 221–243 (VFMG…MALH), and 306–326 (FFFW…LYLM).

It belongs to the glycosyltransferase 4 family. MraY subfamily. It depends on Mg(2+) as a cofactor.

The protein resides in the cell membrane. The catalysed reaction is UDP-N-acetyl-alpha-D-muramoyl-L-alanyl-gamma-D-glutamyl-L-lysyl-D-alanyl-D-alanine + di-trans,octa-cis-undecaprenyl phosphate = Mur2Ac(oyl-L-Ala-gamma-D-Glu-L-Lys-D-Ala-D-Ala)-di-trans,octa-cis-undecaprenyl diphosphate + UMP. It participates in cell wall biogenesis; peptidoglycan biosynthesis. Its function is as follows. Catalyzes the initial step of the lipid cycle reactions in the biosynthesis of the cell wall peptidoglycan: transfers peptidoglycan precursor phospho-MurNAc-pentapeptide from UDP-MurNAc-pentapeptide onto the lipid carrier undecaprenyl phosphate, yielding undecaprenyl-pyrophosphoryl-MurNAc-pentapeptide, known as lipid I. This is Phospho-N-acetylmuramoyl-pentapeptide-transferase from Streptococcus pneumoniae serotype 19F (strain G54).